A 1375-amino-acid polypeptide reads, in one-letter code: ARF guanine-nucleotide exchange factor GNL2 (1375 aa).

The SEC7 domain maps to 486–676 (HIRVRKAQKR…SELFQSIATN (191 aa)). Glutamate 590 is a catalytic residue.

In terms of assembly, homodimer. Preferentially expressed in mature pollen grains and growing pollen tubes.

The protein resides in the cytoplasm. Its subcellular location is the cytosol. The protein localises to the membrane. In terms of biological role, activates the ARF proteins by exchanging bound GDP for free GTP. Plays a role in vesicular protein sorting. Essential for pollen germination. The polypeptide is ARF guanine-nucleotide exchange factor GNL2 (GNL2) (Arabidopsis thaliana (Mouse-ear cress)).